We begin with the raw amino-acid sequence, 437 residues long: Glutamyl-tRNA reductase (437 aa).

Residues 49–52, Ser-109, 114–116, and Gln-120 each bind substrate; these read TCNR and ETQ. The active-site Nucleophile is the Cys-50. Residue 189–194 coordinates NADP(+); sequence GAGEMS.

Belongs to the glutamyl-tRNA reductase family. As to quaternary structure, homodimer.

The enzyme catalyses (S)-4-amino-5-oxopentanoate + tRNA(Glu) + NADP(+) = L-glutamyl-tRNA(Glu) + NADPH + H(+). It functions in the pathway porphyrin-containing compound metabolism; protoporphyrin-IX biosynthesis; 5-aminolevulinate from L-glutamyl-tRNA(Glu): step 1/2. Its function is as follows. Catalyzes the NADPH-dependent reduction of glutamyl-tRNA(Glu) to glutamate 1-semialdehyde (GSA). The protein is Glutamyl-tRNA reductase of Listeria welshimeri serovar 6b (strain ATCC 35897 / DSM 20650 / CCUG 15529 / CIP 8149 / NCTC 11857 / SLCC 5334 / V8).